Consider the following 230-residue polypeptide: Large ribosomal subunit protein uL1 (230 aa).

Belongs to the universal ribosomal protein uL1 family. As to quaternary structure, part of the 50S ribosomal subunit.

Its function is as follows. Binds directly to 23S rRNA. The L1 stalk is quite mobile in the ribosome, and is involved in E site tRNA release. Functionally, protein L1 is also a translational repressor protein, it controls the translation of the L11 operon by binding to its mRNA. The sequence is that of Large ribosomal subunit protein uL1 from Granulibacter bethesdensis (strain ATCC BAA-1260 / CGDNIH1).